The sequence spans 596 residues: MSSSNLAGNTNTTTTSSAASAAAAHSAANASTITSEYSTTQTTTGTFNTDTLSSIGSTSTLHGSQPSQPPPPPPPQVSSPIAAAAAASAALVAQLNPADRWPTEPSAYKLDESIGVGATATVFTAYCLPRNEKVAIKCINLEKCQTSVDELSHEIQAMSQCNHPNVVSYYTSFIAQEELWVVMRLLNCGSMLDILKRKVKAIGKEQAQFGVLDEVSIATVLREVLKGLEYFHLNGQIHRDIKAGNILLADDGTIQIADFGVSGWLASSGGDLSRQKVRHTFVGTPCWMAPEVMEQVQGYDFKADIWSLGILAIELATGTAPYHKYPPMKVLMLTLQNDPPTLETNAERKDQYKAYGKSFKTLIRDCLQKDPAKRPTASELLKYSFFKKGKDKKYLVHTLIENLASVPVVAHHSSKKVASGKLRKDAHGNWEFEYDSPQESDDDSDLEDEEREKKKKKASASASGAGAAGAAGGATGGAASGAPSAQEGGGATTPCPETLNMVLRVRNQQRELNDIKFDYTKSADTVEGIAHELVTAELIDCHDLVIVAANLQKLIDFAESKSDRRSITFALNSGVHANEIPDERTLTGFAQISLLD.

Residues 1–54 (MSSSNLAGNTNTTTTSSAASAAAAHSAANASTITSEYSTTQTTTGTFNTDTLSS) show a composition bias toward low complexity. The disordered stretch occupies residues 1-80 (MSSSNLAGNT…PPPPPQVSSP (80 aa)). 2 positions are modified to phosphothreonine; by autocatalysis: T13 and T32. A compositionally biased stretch (pro residues) spans 67 to 77 (SQPPPPPPPQV). One can recognise a Protein kinase domain in the interval 108–386 (YKLDESIGVG…ASELLKYSFF (279 aa)). ATP contacts are provided by residues 114 to 122 (IGVGATATV) and K137. The residue at position 190 (S190) is a Phosphoserine; by autocatalysis. The active-site Proton acceptor is the D240. T280 is modified (phosphothreonine). Residue S405 is modified to Phosphoserine; by autocatalysis. S419 carries the post-translational modification Phosphoserine. Positions 429–496 (NWEFEYDSPQ…EGGGATTPCP (68 aa)) are disordered. Residues 432 to 450 (FEYDSPQESDDDSDLEDEE) are compositionally biased toward acidic residues. The segment covering 466–479 (GAAGAAGGATGGAA) has biased composition (gly residues).

The protein belongs to the protein kinase superfamily. STE Ser/Thr protein kinase family. STE20 subfamily. As to quaternary structure, interacts (via C-terminus) with clh-3; required for the phosphorylation-mediated inhibition of clh-3 function. Interacts (via C-terminus) with wnk-1; the interaction is direct. Post-translationally, phosphorylated at Thr-280 and Ser-419 probably by wnk-1; phosphorylation results in weak activation. Predominantly autophosphorylated at Thr-32 and Ser-190 and weakly autophosphorylated at Thr-13 and Ser-405 in vitro. In terms of tissue distribution, ubiquitously expressed with a higher expression in the excretory cell. Expressed in both male and female germ cells; up-regulated in maturing spermatocytes but absent in mature sperm.

Its subcellular location is the cytoplasm. The protein localises to the nucleus. The enzyme catalyses L-seryl-[protein] + ATP = O-phospho-L-seryl-[protein] + ADP + H(+). It carries out the reaction L-threonyl-[protein] + ATP = O-phospho-L-threonyl-[protein] + ADP + H(+). Its function is as follows. Plays a role in osmotic stress responses by regulating ion homeostasis and by controlling cell volume via the phosphorylation-mediated inhibition of the chloride channel clh-3. In addition, increases gpdh-1 translation upon osmotic stress, likely downstream of wnk-1. Involved in several developmental processes including the tubular formation of the excretory canals, the formation of the intestine and the progression through larval stages. In addition, required for germ line development by controlling meiosis and chromosomal segregation during spermatogenesis. By controlling clh-3 activity, may regulate the development of the excretory canals and fertility. This chain is Germinal center kinase 3, found in Caenorhabditis elegans.